A 732-amino-acid chain; its full sequence is Ionotropic receptor 40a (732 aa).

An N-terminal signal peptide occupies residues 1–19 (MHKFLALGLLPYLLGLLNS). N-linked (GlcNAc...) asparagine glycosylation is found at Asn18, Asn235, and Asn299. The Extracellular portion of the chain corresponds to 20–369 (TRLTFIGNDE…RPFKQDIWPH (350 aa)). A helical transmembrane segment spans residues 370–390 (LILTIIFSGPIFYGIIALPYI). The Cytoplasmic segment spans residues 391-465 (WRRRWANSDV…NELHNGYRAK (75 aa)). The helical transmembrane segment at 466–486 (FLTIVYWIAATYVLADVYSAQ) threads the bilayer. Topologically, residues 487–688 (LTSQFARPAR…LNLRMLQGAF (202 aa)) are extracellular. The N-linked (GlcNAc...) asparagine glycan is linked to Asn531. The helical transmembrane segment at 689-709 (IALGVGSLAAGVILLLEIVFI) threads the bilayer. Residues 710–732 (KLDQARLWMLCSRLQWIRYDRKV) lie on the Cytoplasmic side of the membrane.

It belongs to the glutamate-gated ion channel (TC 1.A.10.1) family. As to expression, in the antenna, detected in sacculus neurons which innervate the first and second chambers (at protein level).

It localises to the cell membrane. Its function is as follows. Integral part of a neural sensory system in the antenna that provides the neural basis for the response to environmental changes in humidity (hygrosensation). Together with Ir25a and Ir93a, mediates the response of the hygrosensory sacculus neurons to changes in relative humidity and is required for dry detection behavior. The sequence is that of Ionotropic receptor 40a from Drosophila melanogaster (Fruit fly).